The chain runs to 233 residues: Outer membrane protein MIP (233 aa).

The first 20 residues, 1-20 (MKMKLVTAAIMGLAMSTAMA), serve as a signal peptide directing secretion. The PPIase FKBP-type domain occupies 144-233 (SDTVTVEYTG…IHLISVKKAA (90 aa)).

Belongs to the FKBP-type PPIase family.

The protein resides in the cell outer membrane. The enzyme catalyses [protein]-peptidylproline (omega=180) = [protein]-peptidylproline (omega=0). Strongly inhibited by FK506 but is completely resistant to cyclosporin A. Functionally, essential virulence factor associated with macrophage infectivity. Exhibits PPIase activity. The sequence is that of Outer membrane protein MIP (mip) from Legionella longbeachae.